Consider the following 249-residue polypeptide: Phosphate import ATP-binding protein PstB 1 (249 aa).

The ABC transporter domain maps to 4 to 244 (FNIENLDLFY…PKDDRTQGYV (241 aa)). 36 to 43 (GPSGCGKS) is an ATP binding site.

It belongs to the ABC transporter superfamily. Phosphate importer (TC 3.A.1.7) family. The complex is composed of two ATP-binding proteins (PstB), two transmembrane proteins (PstC and PstA) and a solute-binding protein (PstS).

The protein resides in the cell inner membrane. The enzyme catalyses phosphate(out) + ATP + H2O = ADP + 2 phosphate(in) + H(+). Functionally, part of the ABC transporter complex PstSACB involved in phosphate import. Responsible for energy coupling to the transport system. This is Phosphate import ATP-binding protein PstB 1 from Aliivibrio fischeri (strain ATCC 700601 / ES114) (Vibrio fischeri).